A 201-amino-acid polypeptide reads, in one-letter code: 3-isopropylmalate dehydratase small subunit (201 aa).

Belongs to the LeuD family. LeuD type 1 subfamily. Heterodimer of LeuC and LeuD.

The catalysed reaction is (2R,3S)-3-isopropylmalate = (2S)-2-isopropylmalate. It participates in amino-acid biosynthesis; L-leucine biosynthesis; L-leucine from 3-methyl-2-oxobutanoate: step 2/4. Catalyzes the isomerization between 2-isopropylmalate and 3-isopropylmalate, via the formation of 2-isopropylmaleate. This is 3-isopropylmalate dehydratase small subunit from Shewanella amazonensis (strain ATCC BAA-1098 / SB2B).